Reading from the N-terminus, the 103-residue chain is MYAVVKTGGKQYKVAAGEKLKVEQIPADIGAEITLDQVLAVGAGDQIKFGTPLVSGASVKATVIAQGRHDKVKIFKMRRRKHYQKRQGHRQNYTELRIEAIVA.

Belongs to the bacterial ribosomal protein bL21 family. As to quaternary structure, part of the 50S ribosomal subunit. Contacts protein L20.

In terms of biological role, this protein binds to 23S rRNA in the presence of protein L20. In Cupriavidus metallidurans (strain ATCC 43123 / DSM 2839 / NBRC 102507 / CH34) (Ralstonia metallidurans), this protein is Large ribosomal subunit protein bL21.